An 81-amino-acid polypeptide reads, in one-letter code: Prophage excisionase-like protein (81 aa).

To lambdoid phages excisionases.

The sequence is that of Prophage excisionase-like protein (xisE) from Escherichia coli (strain K12).